The following is a 600-amino-acid chain: MTKENLENELKTLPNSAGVYQYFNQEGKLLYVGKAKNLKNRVKSYFAFTPNLHANPRNSLRIQKMIEETVHLEFITTNSEADALILENSFIKQLHPKYNILLRDDKTYPYIYVDFEEEFPRFEITRKLVKKSKIKYFGPFFKGARELLDALYLYYPLKQKASCKSPCIFYQISRCLAPCDKRISREKYLEILDEAMHALLNPSILIKNLEKQMLVLAQNENYEEAAKVRDQIVTIKDLEVKVEIDIAKLEDFEVFALAFENSMLSTLRFVVQNGKIISVNSKITPIKNDIQWDKNEIYKQLILENFSMDIPLLANVIYVYEEFEDRMLLEEILSQRFDKKISIKIPKIGEKRRICDLAFQNALLNIEKEQKNHDFTIQKELKSYFELENLPNDIEIFDNSHLQGVANVGAMVTYSANSWDKSKYRKFHLKHKNDYDQMREVLMRRALDFDKIPPPDLWLIDGGKALLDLAKEIIVSSGANVDILAISKEKIDAKAHRAKGGARDKIHSLKGEFSLSINDKKLQFLQKLRDEAHRFAISFHQNTKKKQDLNSSKLVNLGLSSGVIQKLLAYYGNFESIYKADFKDLAMLVGKKVAQKIKEN.

The GIY-YIG domain maps to 15-100 (NSAGVYQYFN…IKQLHPKYNI (86 aa)). The region spanning 203 to 238 (SILIKNLEKQMLVLAQNENYEEAAKVRDQIVTIKDL) is the UVR domain.

This sequence belongs to the UvrC family. In terms of assembly, interacts with UvrB in an incision complex.

Its subcellular location is the cytoplasm. Functionally, the UvrABC repair system catalyzes the recognition and processing of DNA lesions. UvrC both incises the 5' and 3' sides of the lesion. The N-terminal half is responsible for the 3' incision and the C-terminal half is responsible for the 5' incision. This is UvrABC system protein C from Campylobacter jejuni subsp. jejuni serotype O:6 (strain 81116 / NCTC 11828).